Consider the following 129-residue polypeptide: MAKTATKVRKKIKKNVAEGIAHVHASFNNTIITITDRQGNALSWATSGGAGFKGSRKSTPFAAQVAAEAAGKVAQECGVKNLEVRIKGPGPGRESAVRALNALGMKISSITDITPIPHNGCRPPKKRRI.

This sequence belongs to the universal ribosomal protein uS11 family. As to quaternary structure, part of the 30S ribosomal subunit. Interacts with proteins S7 and S18. Binds to IF-3.

Functionally, located on the platform of the 30S subunit, it bridges several disparate RNA helices of the 16S rRNA. Forms part of the Shine-Dalgarno cleft in the 70S ribosome. This Azoarcus sp. (strain BH72) protein is Small ribosomal subunit protein uS11.